The following is a 200-amino-acid chain: uncharacterized protein (200 aa).

The N-terminal stretch at 1 to 19 (MNAMFHSLFALSFVSLVAS) is a signal peptide. Residues 148–168 (FMVIVSLAAFCISVLAGLALQ) form a helical membrane-spanning segment.

The protein resides in the membrane. This is an uncharacterized protein from Caenorhabditis elegans.